A 453-amino-acid polypeptide reads, in one-letter code: Bifunctional protein GlmU (453 aa).

The segment at 1–225 (MNIVILAAGT…EWETLGVNSK (225 aa)) is pyrophosphorylase. UDP-N-acetyl-alpha-D-glucosamine contacts are provided by residues 6 to 9 (LAAG), Lys20, Gln71, 76 to 77 (GT), 98 to 100 (YGD), Gly135, Glu150, Asn165, and Asn223. Asp100 contributes to the Mg(2+) binding site. Asn223 is a binding site for Mg(2+). The linker stretch occupies residues 226–246 (AQLAELERIHQRNVADALLVD). The tract at residues 247 to 453 (GVTLADPARV…GYVRPVKKKS (207 aa)) is N-acetyltransferase. UDP-N-acetyl-alpha-D-glucosamine contacts are provided by Arg329 and Lys347. His359 (proton acceptor) is an active-site residue. Positions 362 and 373 each coordinate UDP-N-acetyl-alpha-D-glucosamine. Acetyl-CoA is bound by residues Ala376, 382 to 383 (NY), Ser401, and Ala419.

In the N-terminal section; belongs to the N-acetylglucosamine-1-phosphate uridyltransferase family. It in the C-terminal section; belongs to the transferase hexapeptide repeat family. In terms of assembly, homotrimer. Requires Mg(2+) as cofactor.

The protein localises to the cytoplasm. The catalysed reaction is alpha-D-glucosamine 1-phosphate + acetyl-CoA = N-acetyl-alpha-D-glucosamine 1-phosphate + CoA + H(+). It catalyses the reaction N-acetyl-alpha-D-glucosamine 1-phosphate + UTP + H(+) = UDP-N-acetyl-alpha-D-glucosamine + diphosphate. It participates in nucleotide-sugar biosynthesis; UDP-N-acetyl-alpha-D-glucosamine biosynthesis; N-acetyl-alpha-D-glucosamine 1-phosphate from alpha-D-glucosamine 6-phosphate (route II): step 2/2. The protein operates within nucleotide-sugar biosynthesis; UDP-N-acetyl-alpha-D-glucosamine biosynthesis; UDP-N-acetyl-alpha-D-glucosamine from N-acetyl-alpha-D-glucosamine 1-phosphate: step 1/1. It functions in the pathway bacterial outer membrane biogenesis; LPS lipid A biosynthesis. Its function is as follows. Catalyzes the last two sequential reactions in the de novo biosynthetic pathway for UDP-N-acetylglucosamine (UDP-GlcNAc). The C-terminal domain catalyzes the transfer of acetyl group from acetyl coenzyme A to glucosamine-1-phosphate (GlcN-1-P) to produce N-acetylglucosamine-1-phosphate (GlcNAc-1-P), which is converted into UDP-GlcNAc by the transfer of uridine 5-monophosphate (from uridine 5-triphosphate), a reaction catalyzed by the N-terminal domain. This is Bifunctional protein GlmU from Burkholderia orbicola (strain AU 1054).